The chain runs to 830 residues: MDGKTDVKSLMAKFNTGSNPTEEVSTSSRPFKVAGQNSPSGIQSKKNLFDNQGNASPPAGPSNMSKFGTTKPPLAAKPTYEEKSEKEPKPPFLKPTGVSPRFGTQPNSVSRDPEVKVGFLKPVSPKPTSLTKEDSKPVILRPPGNKLHNLNQESDLKTLGPKPGSTPPVPENDLKPGFSKIAGAKSKFMPAPQDADSKPRFPRHTYGQKPSLSTEDAQEEESIPKNTPVQKGSPVQLGAKSRGSPFKPAKEDPEDKDHGTPSSPFAGVVLKPAASRGSPGLSKNSEEKKEERKTDIPKNIFLNKLNQEEPARFPKAPSKLTAGTPWGQSQEKEGDKDSATPKQKPLPPLSVLGPPPSKPSRPPNVDLTRFRKADSANSSNKSQTPYSTTSLPPPPPTQPASQPPLPASHPAHLPAPSLPPRNIKPPLDLKHPINEENQDGVMHSDGTGNLEEEQESDGEMYEDIESSKERDKKREKEEKKRLELERKEQKEREKKEQELRKKFKLTGPIQVIHHAKACCDVKGGKNELSFKQGEDIEIIRITDNPEGKWLGRTARGSYGYIKTTAVKIDYDSLKRKKNTINAVPPRPVEEDQDVYDDVAEQDAPNSHSQSGSGGMFPPPPADDDIYDGIEEEDADDGSVPQVDEKTNAWSWGILKMLKGKDERKKSIREKPKVSESDSNEGSSFPSPHKQLDVGEEVYDDVDASDFPPPPAEMSQGMSVGKTKAEEKDPKKLKKQEKEEKDLRKKFKYDGEIRVLYSTKVASSLTSKKWGTRDLQIKPGESLEVIQSTDDTKVLCRNEEGKYGYVLRSYLVDNDGEIYDDIADGCIYDND.

The tract at residues 1–501 (MDGKTDVKSL…REKKEQELRK (501 aa)) is disordered. The residue at position 13 (lysine 13) is an N6-acetyllysine. A compositionally biased stretch (polar residues) spans 15 to 55 (NTGSNPTEEVSTSSRPFKVAGQNSPSGIQSKKNLFDNQGNA). Phosphoserine occurs at positions 38 and 56. The segment covering 79 to 89 (TYEEKSEKEPK) has biased composition (basic and acidic residues). The residue at position 233 (serine 233) is a Phosphoserine. Composition is skewed to basic and acidic residues over residues 248-259 (PAKEDPEDKDHG) and 284-296 (NSEE…KTDI). Serine 329 is modified (phosphoserine). Basic and acidic residues predominate over residues 330-339 (QEKEGDKDSA). Composition is skewed to pro residues over residues 344 to 362 (KPLP…PSRP) and 391 to 407 (LPPP…PLPA). The interaction with SKAP1 stretch occupies residues 347–447 (PPLSVLGPPP…QDGVMHSDGT (101 aa)). Over residues 450–464 (LEEEQESDGEMYEDI) the composition is skewed to acidic residues. Position 456 is a phosphoserine (serine 456). Residues 461–464 (YEDI) carry the SH2-binding motif. Positions 465-500 (ESSKERDKKREKEEKKRLELERKEQKEREKKEQELR) are enriched in basic and acidic residues. Residues 465–502 (ESSKERDKKREKEEKKRLELERKEQKEREKKEQELRKK) adopt a coiled-coil conformation. A Nuclear localization signal motif is present at residues 479-486 (KKRLELER). Residues 510–571 (QVIHHAKACC…KTTAVKIDYD (62 aa)) form the SH3 1 domain. Residue tyrosine 570 is modified to Phosphotyrosine. Serine 572 is modified (phosphoserine). The SH2-binding; to LCP2 motif lies at 595–598 (YDDV). Disordered stretches follow at residues 601–646 (QDAP…DEKT) and 660–739 (KDER…EKEE). Positions 621–636 (ADDDIYDGIEEEDADD) are enriched in acidic residues. The SH2-binding; to FYN signature appears at 626 to 629 (YDGI). Over residues 660–675 (KDERKKSIREKPKVSE) the composition is skewed to basic and acidic residues. Positions 693–703 (VGEEVYDDVDA) are enriched in acidic residues. Position 698 is a phosphotyrosine (tyrosine 698). A compositionally biased stretch (basic and acidic residues) spans 722–739 (TKAEEKDPKKLKKQEKEE). The short motif at 732 to 739 (LKKQEKEE) is the Nuclear localization signal element. One can recognise an SH3 2 domain in the interval 747–815 (KYDGEIRVLY…LRSYLVDNDG (69 aa)).

Part of a complex consisting of SKAP2, FYB1 and PTPNS1. Part of a complex consisting of SKAP2, FYB1 and LILRB3. Part of a complex consisting of SKAP1, FYB1 and CLNK. Interacts with CLNK (via its SH2 domain) and FYN; this interaction allows SKAP1 and FYB1 to recruit FYN to the complex, thus promoting the phosphorylation of CLNK by FYN. Interacts with FYN. Interacts with LCP2. Interacts with SKAP1. Interacts with SKAP2. Interacts with FASLG. Interacts with EVL. Interacts with TMEM47. Interacts with LCK. In terms of processing, T-cell receptor ligation leads to increased tyrosine phosphorylation.

The protein localises to the cytoplasm. It localises to the nucleus. It is found in the cell junction. Functionally, acts as an adapter protein of the FYN and LCP2 signaling cascades in T-cells. May play a role in linking T-cell signaling to remodeling of the actin cytoskeleton. Modulates the expression of IL2. Involved in platelet activation. Prevents the degradation of SKAP1 and SKAP2. May be involved in high affinity immunoglobulin epsilon receptor signaling in mast cells. This chain is FYN-binding protein 1, found in Rattus norvegicus (Rat).